The primary structure comprises 897 residues: uncharacterized protein (897 aa).

Disordered regions lie at residues 25–89 (RLQD…TRKR) and 106–168 (PTRL…TPPS). Low complexity-rich tracts occupy residues 32-44 (SSSP…SSSS), 57-68 (SLQNSQSSSYSL), and 106-142 (PTRL…SSVS). In terms of domain architecture, Helicase ATP-binding spans 263 to 446 (SMEQSSKCGG…YSLLKFLRIK (184 aa)). 276–283 (DDMGLGKT) is a binding site for ATP. A DEAH box motif is present at residues 397 to 400 (DEAH). The RING-type zinc-finger motif lies at 606-655 (CSVCLDPCLAPVFIIPCGHFTCQECMSMLVGQKYGSSSTSTIIAKCPMCR). The Helicase C-terminal domain maps to 727-890 (QARQTILDII…LSRLDKEELL (164 aa)).

This sequence belongs to the SNF2/RAD54 helicase family.

The protein resides in the cytoplasm. Its subcellular location is the nucleus. This is an uncharacterized protein from Schizosaccharomyces pombe (strain 972 / ATCC 24843) (Fission yeast).